The chain runs to 159 residues: Small ribosomal subunit protein uS9 (159 aa).

It belongs to the universal ribosomal protein uS9 family.

In Rickettsia africae (strain ESF-5), this protein is Small ribosomal subunit protein uS9.